The primary structure comprises 461 residues: MKLWGGRFEKSTDALVEDFHSSISFDQRLYKQDIQGSIAHARMLGEIGVLTSAEAQQIIEGLKGILTDIREGKIQFEIGAEDIHMNVEKLLTERVGTVGKKVHTGRSRNDQVALDLRLFLREEIDHTQELLIALLRTVLDLAKEHQETYMPGYTHLQKAQPISFAHHMMAYAQMFLRDLGRLKDTRQRLNVSPLGSGALAGTTFPLEREMVAQELGFDGITWNSLDGVSDRDFALEFLSAASILMMHLSRLCEELVLWSTGEFQFVIMDDGYSTGSSIMPQKKNPDVAELVRGKTGRVYGDLVALLTVMKGLPLAYNKDMQEDKEQVFDAVDTIQKSLLVVEPMLRTMKVNKKAMAEGAKGGFTNATDLADYLAKKNVPFREAHEIVGKLVLYCSKRGCGLEDLTLKEFQEHSDVFAEDLFESIGIEYCVRQRHIPGGPSPESVAQAILWTEHILEQFTGG.

The protein belongs to the lyase 1 family. Argininosuccinate lyase subfamily.

The protein localises to the cytoplasm. The catalysed reaction is 2-(N(omega)-L-arginino)succinate = fumarate + L-arginine. The protein operates within amino-acid biosynthesis; L-arginine biosynthesis; L-arginine from L-ornithine and carbamoyl phosphate: step 3/3. The chain is Argininosuccinate lyase from Desulfitobacterium hafniense (strain DSM 10664 / DCB-2).